We begin with the raw amino-acid sequence, 380 residues long: Glycogenin-2 (380 aa).

UDP contacts are provided by Leu10, Tyr16, and Arg95. UDP-alpha-D-glucose is bound by residues Leu10, Tyr16, Arg95, Lys104, Asp120, Ala121, Asp122, Asn158, Thr159, Asp185, Asp188, and Gln189. Residues Asp120, Ala121, and Asp122 each coordinate UDP. Asp120 is a Mn(2+) binding site. A Mn(2+)-binding site is contributed by Asp122. Tyr230 and Tyr232 each carry an O-linked (Glc...) tyrosine glycan. His249, Gly252, and Lys255 together coordinate UDP. His249 contributes to the Mn(2+) binding site. Gly252 and Lys255 together coordinate UDP-alpha-D-glucose. The disordered stretch occupies residues 331-355 (SVDRNASQKSTAEKHDIEKPTSKPQ). The segment covering 341-351 (TAEKHDIEKPT) has biased composition (basic and acidic residues). The O-linked (Glc...) tyrosine glycan is linked to Tyr367.

Belongs to the glycosyltransferase 8 family. Glycogenin subfamily. In terms of assembly, interacts with glycogen synthase GSY2. Mn(2+) is required as a cofactor.

The protein resides in the cytoplasm. The protein localises to the vacuole. It carries out the reaction L-tyrosyl-[glycogenin] + UDP-alpha-D-glucose = alpha-D-glucosyl-L-tyrosyl-[glycogenin] + UDP + H(+). The catalysed reaction is [1,4-alpha-D-glucosyl](n)-L-tyrosyl-[glycogenin] + UDP-alpha-D-glucose = [1,4-alpha-D-glucosyl](n+1)-L-tyrosyl-[glycogenin] + UDP + H(+). In terms of biological role, self-glucosylating initiator of glycogen synthesis. It catalyzes the formation of a short alpha (1,4)-glucosyl chain covalently attached via a glucose 1-O-tyrosyl linkage to internal tyrosine residues and these chains act as primers for the elongation reaction catalyzed by glycogen synthase. Capable of transferring glucosyl residues to unbound acceptors such as free oligoglucans or oligoglucan derivatives. The protein is Glycogenin-2 of Saccharomyces cerevisiae (strain ATCC 204508 / S288c) (Baker's yeast).